The sequence spans 312 residues: MTKIIFMGTPEFSVPVLTQLASTYDVVAVVTQPDRPVGRKRVLTPPPVKKAALELAIPVYQPEKLRTSSELEELIALEADLLVTAAYGQILPNSLLESPKHGAINVHASLLPEYRGGAPVHYALLDGKTETGVTIMYMVEKLDAGDMISQRKIPITDEDNTGTMFDKLSILGAELLMDTLPDFLAGKITATPQDPEKVTFARNISREQEKIDWTKPGRTIFNQIRGLSPWPVAYTTLEEKPFKIWEATYEDTKEGGEPGAILADKTTLKIVAGDGTLIVPTVIQPAGKPKMDVHSFMTGAGRNLSKTTRFGE.

109 to 112 (SLLP) is a (6S)-5,6,7,8-tetrahydrofolate binding site.

It belongs to the Fmt family.

The enzyme catalyses L-methionyl-tRNA(fMet) + (6R)-10-formyltetrahydrofolate = N-formyl-L-methionyl-tRNA(fMet) + (6S)-5,6,7,8-tetrahydrofolate + H(+). In terms of biological role, attaches a formyl group to the free amino group of methionyl-tRNA(fMet). The formyl group appears to play a dual role in the initiator identity of N-formylmethionyl-tRNA by promoting its recognition by IF2 and preventing the misappropriation of this tRNA by the elongation apparatus. This chain is Methionyl-tRNA formyltransferase, found in Listeria monocytogenes serovar 1/2a (strain ATCC BAA-679 / EGD-e).